The chain runs to 272 residues: Lyso-glycine lipid O-acyltransferase (272 aa).

It belongs to the O-acyltransferase GlsA family.

The enzyme catalyses a lyso-glycine lipid + a fatty acyl-[ACP] = a glycine lipid + holo-[ACP]. The catalysed reaction is N-[(3R)-3-hydroxyhexadecanoyl]-glycine + hexadecanoyl-[ACP] = N-[(3R)-3-(hexadecanoyloxy)hexadecanoyl]-glycine + holo-[ACP]. Its pathway is lipid metabolism. Its function is as follows. Is involved in the production of glycine lipids (GL), which are phosphorus-free membrane lipids important for fitness during growth of the human gut bacterium B.thetaiotaomicron in vivo and in vitro. Catalyzes the second step of GL biosynthesis, i.e. the O-acylation of the hydroxyl group of lyso-glycine lipids, resulting in the production of the mature diacylated glycine lipids. This Bacteroides thetaiotaomicron (strain ATCC 29148 / DSM 2079 / JCM 5827 / CCUG 10774 / NCTC 10582 / VPI-5482 / E50) protein is Lyso-glycine lipid O-acyltransferase.